The chain runs to 404 residues: Multidrug resistance protein MdtG (404 aa).

11 consecutive transmembrane segments (helical) span residues 19-39 (LGCF…PLYV), 56-76 (LVFS…GGLA), 90-110 (LGMA…QFLI), 113-133 (ALLG…ATQV), 144-164 (TLST…GLLA), 171-191 (PVFF…FFFI), 222-242 (LFVT…ILTL), 254-274 (IAFI…LSAP), 288-308 (ILIV…FVQT), 317-337 (FLLG…LVYN), and 376-396 (AVFC…WNSL).

This sequence belongs to the major facilitator superfamily. DHA1 family. MdtG (TC 2.A.1.2.20) subfamily.

The protein resides in the cell inner membrane. This Salmonella arizonae (strain ATCC BAA-731 / CDC346-86 / RSK2980) protein is Multidrug resistance protein MdtG.